The primary structure comprises 224 residues: UPF0758 protein ABO_0214 (224 aa).

The region spanning 102 to 224 (PLDNPDKAGQ…WVSLASRGAV (123 aa)) is the MPN domain. Residues His173, His175, and Asp186 each coordinate Zn(2+). Residues 173–186 (HNHPSGVAEPSQSD) carry the JAMM motif motif.

Belongs to the UPF0758 family.

This chain is UPF0758 protein ABO_0214, found in Alcanivorax borkumensis (strain ATCC 700651 / DSM 11573 / NCIMB 13689 / SK2).